Here is a 594-residue protein sequence, read N- to C-terminus: P-granule-associated novel protein 1 (594 aa).

The first 18 residues, 1–18, serve as a signal peptide directing secretion; that stretch reads MRSLLSFVLLALARIAIS. Topologically, residues 19–513 are extracellular; that stretch reads EETKSCIDIE…PEEEEVYRSG (495 aa). 15 LRR repeats span residues 78–101, 103–124, 125–149, 150–173, 175–197, 198–221, 222–245, 246–269, 271–290, 291–315, 318–341, 343–365, 374–397, 399–419, and 420–442; these read GTELGRLTIRDSTVNVLPQDLFEN, FAKQVKLERCGLSTLQPNSFQS, LGGSAELLSLRENRIKKLEKGLFTG, LKSLKTLDLAMNKIQEIDVGAFEE, KKVEELLLNENDIRVLKTGTFDG, MKNLKKLTLQNCNLEIIQKGAFRG, LNSLEQLILSNNNLENIDWTIFSA, LKNLRVLDLGSNKISNVEMKSFPK, EKLVLNNNTIDSMKSIKLKD, LPSLVVALFDRNKIESIGDMDMFGL, SDRIETLSLARNNLSQISPKAFQH, PNLITLLLQYNQIEELSSHSPSQ, LKKLVTLQLSSNNLSVIRSDELPK, LSSLALDHNVISKIEARALEG, and MEIKRLYLHSNKLNYLYQGTFDS. The chain crosses the membrane as a helical span at residues 514-534; sequence WITVAATILTIVTIVIMVIIA. The Cytoplasmic segment spans residues 535 to 594; the sequence is MLYFKDARYQFPLRGRRSDSDLHKLIENDPLNIASDSILVVPAMPKRNTGPKKTVRFQNF.

Interacts with glh-1. Interacts (via LRR regions) with myrf-1 (via C-terminus); the interaction promotes the role of myrf-1 in the synaptic remodeling of DD GABAergic motor neurons at the cell membrane. As to expression, expressed in the germline and somatic cells. In terms of tissue distribution, expressed in the germline and somatic cells. Expressed at higher levels in germline cells relative to somatic cells. Expressed in germline cells. As to expression, highly expressed in the pharynx and at lower levels in the intestine, but not detected in other tissues. Other studies suggest a broader expression pattern in somatic tissues: from embryogenesis to adult stages, expressed strongly in body wall muscle, vulva, somatic gonad and pharynx, at lower levels in the nerve ring, hypodermis, and rectal epithelia, and very weakly in the intestine.

Its subcellular location is the cytoplasm. The protein localises to the apical cell membrane. Functionally, regulates diverse developmental processes including larval molting and gonad maturation. Promotes the localization of myrf-1 and myrf-2 to the cell membrane. In association with myrf-1, promotes the synaptic remodeling of DD GABAergic motor neurons whereby new synapses form in the dorsal processes of DD neurons. The protein is P-granule-associated novel protein 1 of Caenorhabditis elegans.